Consider the following 345-residue polypeptide: Succinylglutamate desuccinylase (345 aa).

3 residues coordinate Zn(2+): His-63, Glu-66, and His-160. Glu-224 is a catalytic residue.

The protein belongs to the AspA/AstE family. Succinylglutamate desuccinylase subfamily. Requires Zn(2+) as cofactor.

It catalyses the reaction N-succinyl-L-glutamate + H2O = L-glutamate + succinate. It participates in amino-acid degradation; L-arginine degradation via AST pathway; L-glutamate and succinate from L-arginine: step 5/5. In terms of biological role, transforms N(2)-succinylglutamate into succinate and glutamate. The chain is Succinylglutamate desuccinylase from Shewanella woodyi (strain ATCC 51908 / MS32).